A 273-amino-acid chain; its full sequence is GSCRMSQRGAPSTSPIIPSLSPSSGGNPSPRSSQRIDSVRVPARLPGGSDHPEYGLPLSPRSLRPYLSRGPGAFCAPPWRPDVNRLAGDVNRLFRGISTSSIHVTEDSRVLRRVLLDFYAMGYTHARPTLECWQALLQLMPEQSLPLRATLRAINSEDKYEQRFLDPPSKPPKTLFGEECEVSGDESPSEEEEASGNSTISEFSPEEESASSDFESFSDEEDDSCCTGKWSSSESDSEADVPTNPPTTRARAAQKRRGRPVPKGGRPAKSARR.

2 disordered regions span residues 1–57 (GSCR…YGLP) and 160–273 (YEQR…SARR). The span at 11–33 (PSTSPIIPSLSPSSGGNPSPRSS) shows a compositional bias: low complexity. 2 stretches are compositionally biased toward acidic residues: residues 178–194 (EECE…EEEA) and 204–224 (SPEE…EDDS). Low complexity predominate over residues 261-273 (VPKGGRPAKSARR).

Belongs to the herpesviridae ICP22 family.

The sequence is that of Transcriptional regulator ICP22 homolog from Equus caballus (Horse).